A 133-amino-acid polypeptide reads, in one-letter code: MRHGHGLRKLNRSSSHRLAMLQNMMNSLIEHEVIKTTLPKAKELRRVIEPMITLAKQDSVANRRLAFNRLRERASVTKLFNVLGPHFRLRPGGYTRILKMGFRVGDNAPMALVELVDRPGVATEENNSASAEQ.

This sequence belongs to the bacterial ribosomal protein bL17 family. Part of the 50S ribosomal subunit. Contacts protein L32.

The sequence is that of Large ribosomal subunit protein bL17 from Verminephrobacter eiseniae (strain EF01-2).